A 295-amino-acid chain; its full sequence is 2-methylisocitrate lyase (295 aa).

45-47 (SGG) is a binding site for substrate. Residues D85 and D87 each coordinate Mg(2+). Residues 123 to 124 (CG), R158, E188, 210 to 212 (NIT), R241, and R270 contribute to the substrate site.

It belongs to the isocitrate lyase/PEP mutase superfamily. Methylisocitrate lyase family. As to quaternary structure, homotetramer; dimer of dimers. Mg(2+) is required as a cofactor.

It carries out the reaction (2S,3R)-3-hydroxybutane-1,2,3-tricarboxylate = pyruvate + succinate. It functions in the pathway organic acid metabolism; propanoate degradation. Involved in the catabolism of short chain fatty acids (SCFA) via the 2-methylcitrate cycle I (propionate degradation route). Catalyzes the thermodynamically favored C-C bond cleavage of (2R,3S)-2-methylisocitrate to yield pyruvate and succinate via an alpha-carboxy-carbanion intermediate. In Salmonella typhimurium (strain LT2 / SGSC1412 / ATCC 700720), this protein is 2-methylisocitrate lyase.